The chain runs to 619 residues: Chaperone protein HscA homolog (619 aa).

Belongs to the heat shock protein 70 family.

In terms of biological role, chaperone involved in the maturation of iron-sulfur cluster-containing proteins. Has a low intrinsic ATPase activity which is markedly stimulated by HscB. This chain is Chaperone protein HscA homolog, found in Methylococcus capsulatus (strain ATCC 33009 / NCIMB 11132 / Bath).